Consider the following 307-residue polypeptide: Opsin-like protein carO (307 aa).

N-linked (GlcNAc...) asparagine glycosylation is present at N28. 7 helical membrane passes run 36–56, 64–84, 118–138, 140–160, 166–186, 202–222, and 235–255; these read WYWA…GLGM, IFHY…FTMA, WFLT…MPWP, VLWV…GALV, WGYF…LAWE, FVMC…AWGV, and AVFY…LLLW. Residues 280–307 are disordered; that stretch reads GPNNKVASGHGARNDTATASGSNVNPNA. An N-linked (GlcNAc...) asparagine glycan is attached at N293. Polar residues predominate over residues 294-307; it reads DTATASGSNVNPNA.

The protein belongs to the archaeal/bacterial/fungal opsin family.

The protein resides in the membrane. In terms of biological role, opsin-like protein; part of the car gene cluster that mediates the biosynthesis of neurosporaxanthin, a carboxylic apocarotenoid acting as an essential protective pigment and leading to orange pigmentation. The exact role of carO in carotenoid biosynthesis is not known yet, but it could be involved in the regulation of the pathway by light or other stimuli. This chain is Opsin-like protein carO, found in Fusarium fujikuroi (Bakanae and foot rot disease fungus).